An 82-amino-acid polypeptide reads, in one-letter code: Penaeidin-3h (82 aa).

An N-terminal signal peptide occupies residues 1 to 19 (MRLVVCLVFLASFALVCQG). The residue at position 20 (glutamine 20) is a Pyrrolidone carboxylic acid. Intrachain disulfides connect cysteine 55/cysteine 73 and cysteine 67/cysteine 74. The residue at position 81 (serine 81) is a Serine amide.

Belongs to the penaeidin family.

It localises to the cytoplasmic granule. Functionally, antibacterial and antifungal activity. Presents chitin-binding activity. This Penaeus vannamei (Whiteleg shrimp) protein is Penaeidin-3h.